A 95-amino-acid chain; its full sequence is Protein translocase subunit SecE (95 aa).

Positions 1-35 (MTDAVGSIDMPDAEDEAPESKKKSRKGGKRGKKGP) are disordered. Basic residues predominate over residues 22–35 (KKSRKGGKRGKKGP). The chain crosses the membrane as a helical span at residues 67–87 (VVIVFVVVMIGLVTVLDIGFA).

Belongs to the SecE/SEC61-gamma family. As to quaternary structure, component of the Sec protein translocase complex. Heterotrimer consisting of SecY, SecE and SecG subunits. The heterotrimers can form oligomers, although 1 heterotrimer is thought to be able to translocate proteins. Interacts with the ribosome. Interacts with SecDF, and other proteins may be involved. Interacts with SecA.

The protein resides in the cell membrane. Functionally, essential subunit of the Sec protein translocation channel SecYEG. Clamps together the 2 halves of SecY. May contact the channel plug during translocation. In Streptomyces griseus, this protein is Protein translocase subunit SecE.